The chain runs to 125 residues: Holo-[acyl-carrier-protein] synthase (125 aa).

Mg(2+) is bound by residues aspartate 6 and glutamate 55.

It belongs to the P-Pant transferase superfamily. AcpS family. The cofactor is Mg(2+).

Its subcellular location is the cytoplasm. The enzyme catalyses apo-[ACP] + CoA = holo-[ACP] + adenosine 3',5'-bisphosphate + H(+). Transfers the 4'-phosphopantetheine moiety from coenzyme A to a Ser of acyl-carrier-protein. The chain is Holo-[acyl-carrier-protein] synthase from Chlorobium phaeovibrioides (strain DSM 265 / 1930) (Prosthecochloris vibrioformis (strain DSM 265)).